The following is a 284-amino-acid chain: D-tagatose-1,6-bisphosphate aldolase subunit GatY (284 aa).

The active-site Proton donor is aspartate 82. Zn(2+) contacts are provided by histidine 83 and histidine 180. Glycine 181 contacts dihydroxyacetone phosphate. Zn(2+) is bound at residue histidine 208. Residues 209–211 (GAS) and 230–233 (NVAT) each bind dihydroxyacetone phosphate.

The protein belongs to the class II fructose-bisphosphate aldolase family. TagBP aldolase GatY subfamily. As to quaternary structure, forms a complex with GatZ. Zn(2+) serves as cofactor.

The catalysed reaction is D-tagatofuranose 1,6-bisphosphate = D-glyceraldehyde 3-phosphate + dihydroxyacetone phosphate. The protein operates within carbohydrate metabolism; D-tagatose 6-phosphate degradation; D-glyceraldehyde 3-phosphate and glycerone phosphate from D-tagatose 6-phosphate: step 2/2. Functionally, catalytic subunit of the tagatose-1,6-bisphosphate aldolase GatYZ, which catalyzes the reversible aldol condensation of dihydroxyacetone phosphate (DHAP or glycerone-phosphate) with glyceraldehyde 3-phosphate (G3P) to produce tagatose 1,6-bisphosphate (TBP). Requires GatZ subunit for full activity and stability. Is involved in the catabolism of galactitol. This chain is D-tagatose-1,6-bisphosphate aldolase subunit GatY, found in Escherichia coli O45:K1 (strain S88 / ExPEC).